The primary structure comprises 67 residues: MFAGLPSLSHEQQQKAVERIHELMAQGMSSGQAIALVAEELRATHTGEQIVARFEDEDEDQDEDEDD.

The disordered stretch occupies residues 48 to 67 (EQIVARFEDEDEDQDEDEDD). Positions 55-67 (EDEDEDQDEDEDD) are enriched in acidic residues.

Belongs to the UPF0181 family.

The polypeptide is UPF0181 protein KPK_1966 (Klebsiella pneumoniae (strain 342)).